Consider the following 516-residue polypeptide: Apolipoprotein N-acyltransferase (516 aa).

5 helical membrane-spanning segments follow: residues 23–43, 68–88, 94–114, 135–155, and 178–198; these read ILIL…AFAP, AFWL…RWIY, VAGL…AYLA, WLLA…WVMT, and LGGI…LAML. Residues 241–481 form the CN hydrolase domain; sequence AQGNIAQELK…VLTGFAQSRQ (241 aa). Catalysis depends on E279, which acts as the Proton acceptor. Residue K339 is part of the active site. C391 serves as the catalytic Nucleophile. The helical transmembrane segment at 489 to 509 threads the bilayer; it reads FGNLPVVLGCGALLLLALLLG.

It belongs to the CN hydrolase family. Apolipoprotein N-acyltransferase subfamily.

The protein resides in the cell inner membrane. The catalysed reaction is N-terminal S-1,2-diacyl-sn-glyceryl-L-cysteinyl-[lipoprotein] + a glycerophospholipid = N-acyl-S-1,2-diacyl-sn-glyceryl-L-cysteinyl-[lipoprotein] + a 2-acyl-sn-glycero-3-phospholipid + H(+). It functions in the pathway protein modification; lipoprotein biosynthesis (N-acyl transfer). Its function is as follows. Catalyzes the phospholipid dependent N-acylation of the N-terminal cysteine of apolipoprotein, the last step in lipoprotein maturation. This chain is Apolipoprotein N-acyltransferase, found in Chromobacterium violaceum (strain ATCC 12472 / DSM 30191 / JCM 1249 / CCUG 213 / NBRC 12614 / NCIMB 9131 / NCTC 9757 / MK).